Reading from the N-terminus, the 202-residue chain is Orotate phosphoribosyltransferase (202 aa).

Residues R94, K98, H100, and 120-128 (EDLISTGGS) each bind 5-phospho-alpha-D-ribose 1-diphosphate. An orotate-binding site is contributed by S124.

This sequence belongs to the purine/pyrimidine phosphoribosyltransferase family. PyrE subfamily. Homodimer. The cofactor is Mg(2+).

The enzyme catalyses orotidine 5'-phosphate + diphosphate = orotate + 5-phospho-alpha-D-ribose 1-diphosphate. It functions in the pathway pyrimidine metabolism; UMP biosynthesis via de novo pathway; UMP from orotate: step 1/2. Its function is as follows. Catalyzes the transfer of a ribosyl phosphate group from 5-phosphoribose 1-diphosphate to orotate, leading to the formation of orotidine monophosphate (OMP). This Oceanobacillus iheyensis (strain DSM 14371 / CIP 107618 / JCM 11309 / KCTC 3954 / HTE831) protein is Orotate phosphoribosyltransferase.